Reading from the N-terminus, the 1349-residue chain is Serine/threonine-protein kinase GIN4 (1349 aa).

Over residues 1–20 (MPHSRQPSISSSIMSQSNHN) the composition is skewed to low complexity. The interval 1–30 (MPHSRQPSISSSIMSQSNHNHPQKIGPWKL) is disordered. Residues Ser10, Ser11, Ser12, and Ser15 each carry the phosphoserine modification. One can recognise a Protein kinase domain in the interval 28-288 (WKLGKTLGRG…TEKILRHPLL (261 aa)). ATP-binding positions include 34–42 (LGRGATGRV) and Lys57. The residue at position 69 (Thr69) is a Phosphothreonine. Catalysis depends on Asp158, which acts as the Proton acceptor. Position 191 is a phosphothreonine (Thr191). 3 positions are modified to phosphoserine: Ser294, Ser300, and Ser303. Disordered regions lie at residues 366–498 (QEDN…KAKP) and 510–532 (SNFSLPPSLPPSLPSKDSRYMID). The span at 369 to 384 (NTNNNSPKKSTSFNNK) shows a compositional bias: low complexity. Phosphoserine is present on residues Ser388, Ser390, and Ser393. Residue Thr397 is modified to Phosphothreonine. Composition is skewed to polar residues over residues 406–418 (ISVSRPTSFQYKS) and 426–442 (ANRNSVARHSVASSANN). Residues Ser407 and Ser409 each carry the phosphoserine modification. Phosphothreonine is present on Thr412. The residue at position 413 (Ser413) is a Phosphoserine. The segment covering 443–470 (SPRKSPYKSPYRSPYRSPYKSPSKRYSY) has biased composition (low complexity). Residues Ser455, Ser469, Ser473, Ser477, and Ser485 each carry the phosphoserine modification. Positions 471–488 (NQSPTKSPYGRRSNSQRQ) are enriched in polar residues. Position 556 is a phosphoserine (Ser556). The segment covering 570–585 (RNSIIGKNNNNSNSNK) has biased composition (low complexity). Positions 570–593 (RNSIIGKNNNNSNSNKRMSKRKSI) are disordered. Residue Ser634 is modified to Phosphoserine. A coiled-coil region spans residues 661–701 (EEKEAKEYERLMELERKKHEAELKARRELEKKKRRQKRRSI). Residues 712–737 (KNDADPNNSEQELVDEGIKQPKRQSK) form a disordered region. A phosphoserine mark is found at Ser720 and Ser746. The segment at 756-798 (TLEDVENLKRRSASQPVPKRRQTPVLTRRPVSRLDPLWQAHEN) is disordered. Phosphothreonine occurs at positions 778, 869, and 876. Residue Ser891 is modified to Phosphoserine. Thr941 carries the phosphothreonine modification. Ser973 is modified (phosphoserine). Phosphothreonine is present on residues Thr990 and Thr992. Ser999 bears the Phosphoserine mark. The interval 1011 to 1229 (RTSYYDGSGK…AESKEEKPKS (219 aa)) is disordered. Positions 1024–1040 (RASTTKRYNVHSSSGQR) are enriched in polar residues. A compositionally biased stretch (basic and acidic residues) spans 1044–1053 (KVPDLPKNDY). Thr1056 is subject to Phosphothreonine. Residues Ser1059, Ser1074, Ser1077, Ser1078, Ser1080, and Ser1094 each carry the phosphoserine modification. The span at 1083 to 1094 (VFDKIKLPDGKS) shows a compositional bias: basic and acidic residues. Phosphothreonine is present on Thr1095. 2 positions are modified to phosphoserine: Ser1097 and Ser1098. Thr1106 carries the post-translational modification Phosphothreonine. Positions 1134–1149 (IESSQPMSKVRGNNSS) are enriched in polar residues. Ser1154 carries the phosphoserine modification. The segment covering 1202-1215 (NNTNAATNTTTQQQ) has biased composition (low complexity). Position 1218 is a phosphoserine (Ser1218).

The protein belongs to the protein kinase superfamily. CAMK Ser/Thr protein kinase family. NIM1 subfamily. In terms of assembly, associates with the septin complex which consists of CDC3, CDC10, CDC11, CDC12, and SEP7. Hyperphosphorylated during mitosis at dozens of sites. Among these, 7 have perfect or minimal CDK consensus sites and are CDC28 targets.

The protein localises to the cytoplasm. It localises to the bud neck. It catalyses the reaction L-seryl-[protein] + ATP = O-phospho-L-seryl-[protein] + ADP + H(+). It carries out the reaction L-threonyl-[protein] + ATP = O-phospho-L-threonyl-[protein] + ADP + H(+). Functionally, serine/threonine-protein kinase which regulates the localization and the function of the septins during mitosis. Involved in the formation of the septin ring but not the basal septin band. Phosphorylates septins CDC11 and SEP7. Required for the transition from pseudohyphae to hyphae. Acts upstream of IRS4 and INP51 in regulating cell wall integrity responses. Involved in propolis-induced cell death. The polypeptide is Serine/threonine-protein kinase GIN4 (GIN4) (Candida albicans (strain SC5314 / ATCC MYA-2876) (Yeast)).